A 143-amino-acid chain; its full sequence is Putative protein FPV235 (143 aa).

The protein is Putative protein FPV235 of Vertebrata (FPV).